The sequence spans 1088 residues: Methionine S-methyltransferase (1088 aa).

The protein belongs to the class I-like SAM-binding methyltransferase superfamily. In terms of assembly, homotetramer.

It localises to the cytoplasm. It carries out the reaction L-methionine + S-adenosyl-L-methionine = S-methyl-L-methionine + S-adenosyl-L-homocysteine. In terms of biological role, catalyzes the S-methylmethionine (SMM) biosynthesis from adenosyl-L-homocysteine (AdoMet) and methionine. SMM biosynthesis (by MMT1) and degradation (by HMT-1, HMT-2 and HMT-3) constitute the SMM cycle in plants, which is probably required to achieve short term control of AdoMet level. Also able to catalyze the selenium-methylmethionine (SeMM) from AdoMet and selenium-methionine (SeMet). May play a role in phoem sulfur transport; such function is however not essential. The chain is Methionine S-methyltransferase (MMT1) from Wollastonia biflora (Beach sunflower).